The primary structure comprises 506 residues: Parthenolide synthase (506 aa).

A helical membrane pass occupies residues 10 to 30 (LFLPTLCTILISYIIIKYVLI). N-linked (GlcNAc...) asparagine glycans are attached at residues asparagine 32, asparagine 63, asparagine 121, asparagine 168, and asparagine 175. Residues 301–321 (LLLNVLLGAIDTTFTTIVWAM) traverse the membrane as a helical segment. Cysteine 448 serves as a coordination point for heme.

The protein belongs to the cytochrome P450 family.

The protein resides in the membrane. The catalysed reaction is (+)-costunolide + reduced [NADPH--hemoprotein reductase] + O2 = parthenolide + oxidized [NADPH--hemoprotein reductase] + H2O + H(+). It participates in secondary metabolite biosynthesis; terpenoid biosynthesis. Involved in the biosynthesis of germacrene-derived sesquiterpene lactones. Component of the parthenolide biosynthetic pathway; parthenolide and conjugates are promising anti-cancer drugs highly active against colon cancer cells. Catalyzes the conversion of costunolide to parthenolide. The polypeptide is Parthenolide synthase (Tanacetum parthenium (Feverfew)).